Here is an 876-residue protein sequence, read N- to C-terminus: Probable galactinol--sucrose galactosyltransferase 4 (876 aa).

Residues S7 and S9 each carry the phosphoserine modification.

Belongs to the glycosyl hydrolases 36 family.

The catalysed reaction is alpha-D-galactosyl-(1-&gt;3)-1D-myo-inositol + sucrose = raffinose + myo-inositol. Transglycosidase operating by a ping-pong reaction mechanism. Involved in the synthesis of raffinose, a major soluble carbohydrate in seeds, roots and tubers. This is Probable galactinol--sucrose galactosyltransferase 4 (RFS4) from Arabidopsis thaliana (Mouse-ear cress).